We begin with the raw amino-acid sequence, 457 residues long: tRNA modification GTPase MnmE (457 aa).

R23, E86, and R125 together coordinate (6S)-5-formyl-5,6,7,8-tetrahydrofolate. Residues 221–377 (GVSVLIAGKP…LREAVFETFI (157 aa)) enclose the TrmE-type G domain. N231 is a binding site for K(+). GTP is bound by residues 231–236 (NVGKSS), 250–256 (TSVPGTT), and 275–278 (DTAG). S235 serves as a coordination point for Mg(2+). K(+) is bound by residues T250, V252, and T255. T256 is a Mg(2+) binding site. (6S)-5-formyl-5,6,7,8-tetrahydrofolate is bound at residue K457.

The protein belongs to the TRAFAC class TrmE-Era-EngA-EngB-Septin-like GTPase superfamily. TrmE GTPase family. In terms of assembly, homodimer. Heterotetramer of two MnmE and two MnmG subunits. K(+) is required as a cofactor.

It is found in the cytoplasm. Functionally, exhibits a very high intrinsic GTPase hydrolysis rate. Involved in the addition of a carboxymethylaminomethyl (cmnm) group at the wobble position (U34) of certain tRNAs, forming tRNA-cmnm(5)s(2)U34. This chain is tRNA modification GTPase MnmE, found in Geobacter metallireducens (strain ATCC 53774 / DSM 7210 / GS-15).